The primary structure comprises 313 residues: N(5)-(carboxyethyl)ornithine synthase (313 aa).

Residues R15, K71, and H92 each contribute to the pyruvate site. 171–176 (GSGNVA) is an NADP(+) binding site.

Belongs to the AlaDH/PNT family. CEOS subfamily. As to quaternary structure, homotetramer.

The enzyme catalyses N(5)-[1(S)-1-carboxyethyl]-L-ornithine + NADP(+) + H2O = L-ornithine + pyruvate + NADPH + H(+). Its activity is regulated as follows. Is potently inhibited by the reaction product N(5)-(L-1-carboxyethyl)-L-ornithine. In terms of biological role, catalyzes the NADPH-dependent reductive condensation between pyruvic acid and the side chain amino group of L-ornithine to form N(5)-(L-1-carboxyethyl)-L-ornithine. To a lesser extent, can also use L-lysine as substrate (yielding N(6)-(L-1-carboxyethyl)-L-lysine). NADH cannot replace NADPH in the condensation reaction. This chain is N(5)-(carboxyethyl)ornithine synthase (ceo), found in Lactococcus lactis subsp. lactis (Streptococcus lactis).